The following is a 207-amino-acid chain: MEAFTVVEAVVAPLDRPNVDTDAIIPKQFLKTIERKGLGKHLFDAWRYLERDGKQVNNPDFVLNQPAYAGAQILLARENFGCGSSREHAPWALADYGFRAVIAPSFADIFANNCVQNGILLVRLPMDVVDHLFHEVAANPGYRLRIDLPAQEVQTMGDSRYAFPMDAGHKHKLMHGLDDIQLTLQRDNAIRVYEARRRQTAPWLFRD.

It belongs to the LeuD family. LeuD type 1 subfamily. As to quaternary structure, heterodimer of LeuC and LeuD.

The catalysed reaction is (2R,3S)-3-isopropylmalate = (2S)-2-isopropylmalate. It participates in amino-acid biosynthesis; L-leucine biosynthesis; L-leucine from 3-methyl-2-oxobutanoate: step 2/4. Its function is as follows. Catalyzes the isomerization between 2-isopropylmalate and 3-isopropylmalate, via the formation of 2-isopropylmaleate. This Acidithiobacillus ferrooxidans (strain ATCC 23270 / DSM 14882 / CIP 104768 / NCIMB 8455) (Ferrobacillus ferrooxidans (strain ATCC 23270)) protein is 3-isopropylmalate dehydratase small subunit.